The primary structure comprises 292 residues: 2-(5''-triphosphoribosyl)-3'-dephosphocoenzyme-A synthase (292 aa).

The protein belongs to the CitG/MdcB family.

The enzyme catalyses 3'-dephospho-CoA + ATP = 2'-(5''-triphospho-alpha-D-ribosyl)-3'-dephospho-CoA + adenine. In terms of biological role, catalyzes the formation of 2-(5''-triphosphoribosyl)-3'-dephosphocoenzyme-A, the precursor of the prosthetic group of the holo-acyl carrier protein (gamma chain) of citrate lyase, from ATP and dephospho-CoA. This chain is 2-(5''-triphosphoribosyl)-3'-dephosphocoenzyme-A synthase, found in Escherichia coli O6:K15:H31 (strain 536 / UPEC).